The chain runs to 690 residues: Proprotein convertase subtilisin/kexin type 9 (690 aa).

Residues Met-1–Ala-28 form the signal peptide. Residues Gln-29–Gln-150 constitute a propeptide that is removed on maturation. Residue Tyr-36 is modified to Sulfotyrosine. Residue Ser-45 is modified to Phosphoserine. The Inhibitor I9 domain occupies Thr-75–Val-147. Residues Pro-153 to Trp-459 enclose the Peptidase S8 domain. Residues Asp-184 and His-224 each act as charge relay system in the active site. 2 disulfide bridges follow: Cys-221/Cys-253 and Cys-321/Cys-356. Ser-384 serves as the catalytic Charge relay system. Positions Gly-448–Gln-690 are C-terminal domain. Intrachain disulfides connect Cys-455–Cys-525, Cys-475–Cys-524, and Cys-484–Cys-507. Asn-531 carries an N-linked (GlcNAc...) asparagine glycan. 6 cysteine pairs are disulfide-bonded: Cys-532–Cys-599, Cys-550–Cys-598, Cys-560–Cys-586, Cys-606–Cys-677, Cys-624–Cys-676, and Cys-633–Cys-652. Ser-686 is subject to Phosphoserine.

The protein belongs to the peptidase S8 family. In terms of assembly, monomer. Can self-associate to form dimers and higher multimers which may have increased LDLR degrading activity. The precursor protein but not the mature protein may form multimers. Interacts with APOB, VLDLR, LRP8/APOER2 and BACE1. The full-length immature form (pro-PCSK9) interacts with SCNN1A, SCNN1B and SCNN1G. The pro-PCSK9 form (via C-terminal domain) interacts with LDLR. Interacts (via the C-terminal domain) with ANXA2 (via repeat Annexin 1); the interaction inhibits the degradation of LDLR. It depends on Ca(2+) as a cofactor. In terms of processing, cleavage by furin and PCSK5 generates a truncated inactive protein that is unable to induce LDLR degradation. Undergoes autocatalytic cleavage in the endoplasmic reticulum to release the propeptide from the N-terminus and the cleavage of the propeptide is strictly required for its maturation and activation. The cleaved propeptide however remains associated with the catalytic domain through non-covalent interactions, preventing potential substrates from accessing its active site. As a result, it is secreted from cells as a propeptide-containing, enzymatically inactive protein. Post-translationally, phosphorylation protects the propeptide against proteolysis.

It is found in the cytoplasm. The protein localises to the secreted. Its subcellular location is the endosome. The protein resides in the lysosome. It localises to the cell surface. It is found in the endoplasmic reticulum. The protein localises to the golgi apparatus. With respect to regulation, its proteolytic activity is autoinhibited by the non-covalent binding of the propeptide to the catalytic domain. Inhibited by EGTA. Functionally, crucial player in the regulation of plasma cholesterol homeostasis. Binds to low-density lipid receptor family members: low density lipoprotein receptor (LDLR), very low density lipoprotein receptor (VLDLR), apolipoprotein E receptor (LRP1/APOER) and apolipoprotein receptor 2 (LRP8/APOER2), and promotes their degradation in intracellular acidic compartments. Acts via a non-proteolytic mechanism to enhance the degradation of the hepatic LDLR through a clathrin LDLRAP1/ARH-mediated pathway. May prevent the recycling of LDLR from endosomes to the cell surface or direct it to lysosomes for degradation. Can induce ubiquitination of LDLR leading to its subsequent degradation. Inhibits intracellular degradation of APOB via the autophagosome/lysosome pathway in a LDLR-independent manner. Involved in the disposal of non-acetylated intermediates of BACE1 in the early secretory pathway. Inhibits epithelial Na(+) channel (ENaC)-mediated Na(+) absorption by reducing ENaC surface expression primarily by increasing its proteasomal degradation. Regulates neuronal apoptosis via modulation of LRP8/APOER2 levels and related anti-apoptotic signaling pathways. This chain is Proprotein convertase subtilisin/kexin type 9 (PCSK9), found in Lagothrix lagotricha (Brown woolly monkey).